Reading from the N-terminus, the 202-residue chain is Outer-membrane lipoprotein LolB (202 aa).

A signal peptide spans 1-18 (MFRRTYFWLMLLPLFMVG). The N-palmitoyl cysteine moiety is linked to residue Cys-19. The S-diacylglycerol cysteine moiety is linked to residue Cys-19.

Belongs to the LolB family. In terms of assembly, monomer.

The protein localises to the cell outer membrane. Plays a critical role in the incorporation of lipoproteins in the outer membrane after they are released by the LolA protein. The chain is Outer-membrane lipoprotein LolB from Vibrio vulnificus (strain YJ016).